A 197-amino-acid chain; its full sequence is Segregation and condensation protein B (197 aa).

It belongs to the ScpB family. Homodimer. Homodimerization may be required to stabilize the binding of ScpA to the Smc head domains. Component of a cohesin-like complex composed of ScpA, ScpB and the Smc homodimer, in which ScpA and ScpB bind to the head domain of Smc. The presence of the three proteins is required for the association of the complex with DNA.

It is found in the cytoplasm. Its function is as follows. Participates in chromosomal partition during cell division. May act via the formation of a condensin-like complex containing Smc and ScpA that pull DNA away from mid-cell into both cell halves. The sequence is that of Segregation and condensation protein B from Syntrophotalea carbinolica (strain DSM 2380 / NBRC 103641 / GraBd1) (Pelobacter carbinolicus).